A 196-amino-acid chain; its full sequence is GTP cyclohydrolase-2 (196 aa).

49–53 (RVHSE) contacts GTP. Zn(2+) is bound by residues Cys-54, Cys-65, and Cys-67. GTP-binding positions include Gln-70, 92-94 (EGR), and Thr-114. The Proton acceptor role is filled by Asp-126. Residue Arg-128 is the Nucleophile of the active site. Thr-149 and Lys-154 together coordinate GTP.

It belongs to the GTP cyclohydrolase II family. As to quaternary structure, homodimer. It depends on Zn(2+) as a cofactor.

It catalyses the reaction GTP + 4 H2O = 2,5-diamino-6-hydroxy-4-(5-phosphoribosylamino)-pyrimidine + formate + 2 phosphate + 3 H(+). It functions in the pathway cofactor biosynthesis; riboflavin biosynthesis; 5-amino-6-(D-ribitylamino)uracil from GTP: step 1/4. Its function is as follows. Catalyzes the conversion of GTP to 2,5-diamino-6-ribosylamino-4(3H)-pyrimidinone 5'-phosphate (DARP), formate and pyrophosphate. The sequence is that of GTP cyclohydrolase-2 from Yersinia pestis.